Consider the following 34-residue polypeptide: MSDIN-like toxin proprotein 4 (34 aa).

Residues 1-10 (MSDINATRLP) constitute a propeptide that is removed on maturation. The cyclopeptide (Val-Pro) cross-link spans 11-17 (VWIGYSP). Residues 18–34 (CVGDDCIALLTRGEGLC) constitute a propeptide that is removed on maturation.

It belongs to the MSDIN fungal toxin family. Post-translationally, processed by the macrocyclase-peptidase enzyme POPB to yield a toxic cyclic heptapeptide. POPB first removes 10 residues from the N-terminus. Conformational trapping of the remaining peptide forces the enzyme to release this intermediate rather than proceed to macrocyclization. The enzyme rebinds the remaining peptide in a different conformation and catalyzes macrocyclization of the N-terminal 7 residues. Expressed in basidiocarps.

Functionally, probable toxin that belongs to the MSDIN-like toxin family responsible for a large number of food poisoning cases and deaths. This Amanita exitialis (Guangzhou destroying angel) protein is MSDIN-like toxin proprotein 4.